Reading from the N-terminus, the 422-residue chain is Enolase (422 aa).

Gln162 is a binding site for (2R)-2-phosphoglycerate. Glu204 functions as the Proton donor in the catalytic mechanism. 3 residues coordinate Mg(2+): Asp241, Glu284, and Asp311. (2R)-2-phosphoglycerate-binding residues include Lys336, Arg365, Ser366, and Lys387. Lys336 acts as the Proton acceptor in catalysis.

It belongs to the enolase family. It depends on Mg(2+) as a cofactor.

The protein localises to the cytoplasm. It localises to the secreted. Its subcellular location is the cell surface. It carries out the reaction (2R)-2-phosphoglycerate = phosphoenolpyruvate + H2O. It functions in the pathway carbohydrate degradation; glycolysis; pyruvate from D-glyceraldehyde 3-phosphate: step 4/5. Its function is as follows. Catalyzes the reversible conversion of 2-phosphoglycerate (2-PG) into phosphoenolpyruvate (PEP). It is essential for the degradation of carbohydrates via glycolysis. The chain is Enolase from Bartonella tribocorum (strain CIP 105476 / IBS 506).